A 150-amino-acid polypeptide reads, in one-letter code: Endoribonuclease YbeY (150 aa).

Zn(2+) contacts are provided by H102, H106, and H112.

This sequence belongs to the endoribonuclease YbeY family. Zn(2+) serves as cofactor.

The protein resides in the cytoplasm. Single strand-specific metallo-endoribonuclease involved in late-stage 70S ribosome quality control and in maturation of the 3' terminus of the 16S rRNA. The sequence is that of Endoribonuclease YbeY from Thermotoga petrophila (strain ATCC BAA-488 / DSM 13995 / JCM 10881 / RKU-1).